We begin with the raw amino-acid sequence, 267 residues long: 5'-nucleotidase SurE (267 aa).

Residues aspartate 9, aspartate 10, serine 40, and asparagine 97 each contribute to the a divalent metal cation site.

Belongs to the SurE nucleotidase family. A divalent metal cation serves as cofactor.

Its subcellular location is the cytoplasm. The enzyme catalyses a ribonucleoside 5'-phosphate + H2O = a ribonucleoside + phosphate. Functionally, nucleotidase that shows phosphatase activity on nucleoside 5'-monophosphates. This Helicobacter pylori (strain G27) protein is 5'-nucleotidase SurE.